The chain runs to 124 residues: MATVNQLVRKPRVRKVAKSNVPALEACPQKRGVCTRVYTTTPKKPNSALRKVCRVRLTNGFEVTSYIGGEGHNLQEHSVILIRGGRVKDLPGVRYHTVRGALDCSGVKDRKQARSKYGVKNAKA.

A 3-methylthioaspartic acid modification is found at Asp-89.

Belongs to the universal ribosomal protein uS12 family. Part of the 30S ribosomal subunit. Contacts proteins S8 and S17. May interact with IF1 in the 30S initiation complex.

With S4 and S5 plays an important role in translational accuracy. Its function is as follows. Interacts with and stabilizes bases of the 16S rRNA that are involved in tRNA selection in the A site and with the mRNA backbone. Located at the interface of the 30S and 50S subunits, it traverses the body of the 30S subunit contacting proteins on the other side and probably holding the rRNA structure together. The combined cluster of proteins S8, S12 and S17 appears to hold together the shoulder and platform of the 30S subunit. This chain is Small ribosomal subunit protein uS12, found in Erwinia amylovora (Fire blight bacteria).